The following is a 570-amino-acid chain: Carotenoid cleavage dioxygenase 8, chloroplastic (570 aa).

The transit peptide at 1-56 directs the protein to the chloroplast; the sequence is MASLITTKAMMSHHHVLSSTRITTLYSDNSIGDQQIKTKPQVPHRLFARRIFGVTR. Fe cation is bound by residues histidine 254, histidine 305, histidine 372, and histidine 563.

The protein belongs to the carotenoid oxygenase family. It depends on Fe(2+) as a cofactor. As to expression, expressed in flowers, siliques, inflorescence stems, petiole and leaves, and at a much higher level in roots.

It is found in the plastid. The protein resides in the chloroplast. The enzyme catalyses 9-cis-10'-apo-beta-carotenal + 2 O2 = (2E,4E,6E)-7-hydroxy-4-methylhepta-2,4,6-trienal + (11R)-carlactone. It carries out the reaction all-trans-10'-apo-beta-carotenal + O2 = (2E,4E,6E)-4-methylocta-2,4,6-trienedial + 13-apo-beta-carotenone. Functionally, involved in strigolactones biosynthesis by cleaving the C(27) 9-cis-10'-apo-beta-carotenal produced by CCD7. Produces the C(19) carlactone and a C(8) hydroxyaldehyde. Also shows lower activity with all-trans-10'-apo-beta-carotenal producing a C(9) dialdehyde and the C(18) 13-apo-beta-carotenone. Strigolactones are hormones that inhibit tillering and shoot branching through the MAX-dependent pathway, contribute to the regulation of shoot architectural response to phosphate-limiting conditions and function as rhizosphere signal that stimulates hyphal branching of arbuscular mycorrhizal fungi and trigger seed germination of root parasitic weeds. Also active on other carotenoid substrates like licopene or zeaxanthin. The sequence is that of Carotenoid cleavage dioxygenase 8, chloroplastic from Arabidopsis thaliana (Mouse-ear cress).